The primary structure comprises 492 residues: Steroid 21-hydroxylase (492 aa).

The heme b site is built by arginine 91 and lysine 120. Arginine 231 is a binding site for 17alpha-hydroxyprogesterone. Position 231 (arginine 231) interacts with progesterone. Histidine 363, arginine 424, and cysteine 426 together coordinate heme b.

The protein belongs to the cytochrome P450 family. It depends on heme b as a cofactor.

The protein localises to the endoplasmic reticulum membrane. It localises to the microsome membrane. It catalyses the reaction 17alpha-hydroxyprogesterone + reduced [NADPH--hemoprotein reductase] + O2 = 11-deoxycortisol + oxidized [NADPH--hemoprotein reductase] + H2O + H(+). It carries out the reaction progesterone + reduced [NADPH--hemoprotein reductase] + O2 = 21-hydroxyprogesterone + oxidized [NADPH--hemoprotein reductase] + H2O + H(+). In terms of biological role, specifically catalyzes the 21-hydroxylation of steroids. Required for the adrenal synthesis of mineralocorticoids and glucocorticoids. The polypeptide is Steroid 21-hydroxylase (CYP21) (Canis lupus familiaris (Dog)).